The primary structure comprises 1461 residues: Neogenin (1461 aa).

The N-terminal stretch at 1 to 33 is a signal peptide; sequence MAAERGARRLLSTPSFWLYCLLLLGRRAPGAAA. The Extracellular portion of the chain corresponds to 34–1105; it reads ARSGSAPQSP…PTSPLDSNML (1072 aa). Ig-like C2-type domains are found at residues 52–141, 152–238, 243–336, and 341–426; these read PFYF…TIIS, PRFT…VELK, PEVI…AELT, and PEFL…AQLI. A glycan (N-linked (GlcNAc...) asparagine) is linked at Asn73. Intrachain disulfides connect Cys74/Cys129, Cys173/Cys221, and Cys270/Cys320. Asn210 is a glycosylation site (N-linked (GlcNAc...) asparagine). Asn326 carries an N-linked (GlcNAc...) asparagine glycan. An intrachain disulfide couples Cys362 to Cys410. Fibronectin type-III domains follow at residues 441 to 535, 541 to 631, 636 to 731, 741 to 831, 856 to 952, and 957 to 1054; these read APRD…TQPE, PAPN…TLSD, APQN…TFES, VPSS…RPHT, PPVG…TFEL, and PPKD…TPKA. Residues Asn470 and Asn489 are each glycosylated (N-linked (GlcNAc...) asparagine). N-linked (GlcNAc...) asparagine glycosylation is found at Asn639 and Asn715. Asn909 is a glycosylation site (N-linked (GlcNAc...) asparagine). The tract at residues 1041-1097 is disordered; it reads GPMSEAVQFRTPKADSSDKMPNDQASGSGGKGSRLPDLGSDYKPPMSGSNSPHGSPT. Basic and acidic residues predominate over residues 1052-1061; it reads PKADSSDKMP. Residues 1087–1097 are compositionally biased toward polar residues; the sequence is SGSNSPHGSPT. Residues 1106-1126 traverse the membrane as a helical segment; sequence LVIIVSVGVITIVVVVIIAVF. The Cytoplasmic segment spans residues 1127-1461; the sequence is CTRRTTSHQK…MKDLNAITTA (335 aa). Disordered stretches follow at residues 1138 to 1160, 1174 to 1206, 1235 to 1276, and 1289 to 1381; these read KRAA…DVKP, PIDK…SMDS, PKMM…PARS, and TSMS…ALPS. A phosphoserine mark is found at Ser1178 and Ser1194. The segment covering 1191 to 1206 has biased composition (polar residues); sequence PRNSQDITPVDNSMDS. A Phosphothreonine modification is found at Thr1198. Composition is skewed to polar residues over residues 1289–1322 and 1330–1349; these read TSMS…TCCT and ATSS…QSLP. Positions 1366–1375 are enriched in pro residues; that stretch reads AIPPPGPPTY. Residue Ser1401 is modified to Phosphoserine. Phosphothreonine is present on Thr1404. 3 positions are modified to phosphoserine: Ser1432, Ser1434, and Ser1435.

It belongs to the immunoglobulin superfamily. DCC family. As to quaternary structure, interacts with MYO10. Interacts with RGMA and RGMB. Interacts with BMP2, BMP4, BMP6, and BMP7. Widely expressed and also in cancer cell lines.

Its subcellular location is the cell membrane. Multi-functional cell surface receptor regulating cell adhesion in many diverse developmental processes, including neural tube and mammary gland formation, myogenesis and angiogenesis. Receptor for members of the BMP, netrin, and repulsive guidance molecule (RGM) families. Netrin-Neogenin interactions result in a chemoattractive axon guidance response and cell-cell adhesion, the interaction between NEO1/Neogenin and RGMa and RGMb induces a chemorepulsive response. The chain is Neogenin (NEO1) from Homo sapiens (Human).